Here is a 91-residue protein sequence, read N- to C-terminus: uncharacterized protein (91 aa).

Belongs to the FrmR/RcnR family.

The protein localises to the cytoplasm. This is an uncharacterized protein from Serratia marcescens.